The following is a 124-amino-acid chain: Fluoride-specific ion channel FluC (124 aa).

Helical transmembrane passes span 3–23 (VLLIFLGCGAGGVARYGVSNL), 34–54 (IGTLIVNITGSLLMGILFIFI), 68–88 (LLLIGFLGGYTTFSSFSIETF), and 100–120 (ALNVLLSVALCIAGAWLGVLI). Residues glycine 75 and threonine 78 each coordinate Na(+).

The protein belongs to the fluoride channel Fluc/FEX (TC 1.A.43) family.

It localises to the cell inner membrane. The catalysed reaction is fluoride(in) = fluoride(out). Its activity is regulated as follows. Na(+) is not transported, but it plays an essential structural role and its presence is essential for fluoride channel function. Fluoride-specific ion channel. Important for reducing fluoride concentration in the cell, thus reducing its toxicity. In Coxiella burnetii (strain Dugway 5J108-111), this protein is Fluoride-specific ion channel FluC.